Reading from the N-terminus, the 119-residue chain is Small ribosomal subunit protein bS6 (119 aa).

The protein belongs to the bacterial ribosomal protein bS6 family.

Functionally, binds together with bS18 to 16S ribosomal RNA. In Thermosipho africanus (strain TCF52B), this protein is Small ribosomal subunit protein bS6.